The sequence spans 396 residues: Schizokinen exporter SchE (396 aa).

The first 25 residues, 1–25 (MLPKLILLATLYISQFIPTTFFIQA), serve as a signal peptide directing secretion. Topologically, residues 26–39 (LPVFMRQQKMSLDV) are cytoplasmic. A helical membrane pass occupies residues 40–60 (IGFLGLLILPSGLKFLWSPFI). Topologically, residues 61–73 (DRYRLGKLGHYRG) are periplasmic. Residues 74–94 (WIICFQLLLISTMLVTAFIDI) form a helical membrane-spanning segment. Over 95–104 (QDNLNAFLTC) the chain is Cytoplasmic. A helical membrane pass occupies residues 105–127 (MFLASLFSSSQDIATDALAVNLL). At 128-137 (EPQERGLGNA) the chain is on the periplasmic side. A helical transmembrane segment spans residues 138-158 (IQSGGNIFGAIIGGGVMLILL). At 159–162 (DKIG) the chain is on the cytoplasmic side. Residues 163–183 (WRYSLITLSIFMLINLVPILI) form a helical membrane-spanning segment. The Periplasmic portion of the chain corresponds to 184 to 214 (YREKSQHQLENSTFFRSYFQPFISFLSRPKA). Residues 215–235 (LPWLFVVLLYMMGDSVTSLMI) form a helical membrane-spanning segment. The Cytoplasmic portion of the chain corresponds to 236–251 (RPLLVDRGLSLPDIGW). Residues 252–272 (ILGIVSYSARIVSALIAGLVI) traverse the membrane as a helical segment. Topologically, residues 273 to 281 (VKLGRIKSL) are periplasmic. A helical transmembrane segment spans residues 282 to 302 (IIFGFIADLTTLLYIIPAIGV). The Cytoplasmic portion of the chain corresponds to 303–304 (SS). Residues 305–325 (LLVLYTVCIIVNATQSMAYTA) form a helical membrane-spanning segment. At 326–346 (LLSAMMDKCEKNTAATDYTMQ) the chain is on the periplasmic side. The next 2 helical transmembrane spans lie at 347 to 367 (VSVMFLGGIAATVLSGMLATT) and 368 to 388 (MGYSFIFIMSAAVSLLSVFLI). Over 389–396 (TQEYGVSS) the chain is Periplasmic.

Belongs to the major facilitator superfamily.

It is found in the cell inner membrane. In terms of biological role, involved in the TolC-like protein HgdD-dependent secretion of schizokinen, a dihydroxamate-type siderophore. Transports schizokinen from the cytoplasm to the periplasm. This is Schizokinen exporter SchE from Nostoc sp. (strain PCC 7120 / SAG 25.82 / UTEX 2576).